We begin with the raw amino-acid sequence, 484 residues long: tRNA-2-methylthio-N(6)-dimethylallyladenosine synthase (484 aa).

The MTTase N-terminal domain maps to 36 to 153 (GKLYIKTHGC…LPELIRARRE (118 aa)). [4Fe-4S] cluster is bound by residues C45, C82, C116, C190, C194, and C197. In terms of domain architecture, Radical SAM core spans 176–415 (RAEGPSAFVS…HINAHAASIS (240 aa)). One can recognise a TRAM domain in the interval 416–479 (QSMVGSVQRV…SNSLRGRIQL (64 aa)). The disordered stretch occupies residues 428–450 (EGPSRRDPNELTGKSENMRPVNF).

The protein belongs to the methylthiotransferase family. MiaB subfamily. Monomer. Requires [4Fe-4S] cluster as cofactor.

Its subcellular location is the cytoplasm. It catalyses the reaction N(6)-dimethylallyladenosine(37) in tRNA + (sulfur carrier)-SH + AH2 + 2 S-adenosyl-L-methionine = 2-methylsulfanyl-N(6)-dimethylallyladenosine(37) in tRNA + (sulfur carrier)-H + 5'-deoxyadenosine + L-methionine + A + S-adenosyl-L-homocysteine + 2 H(+). Catalyzes the methylthiolation of N6-(dimethylallyl)adenosine (i(6)A), leading to the formation of 2-methylthio-N6-(dimethylallyl)adenosine (ms(2)i(6)A) at position 37 in tRNAs that read codons beginning with uridine. The protein is tRNA-2-methylthio-N(6)-dimethylallyladenosine synthase of Xanthomonas axonopodis pv. citri (strain 306).